A 95-amino-acid polypeptide reads, in one-letter code: Aspartyl/glutamyl-tRNA(Asn/Gln) amidotransferase subunit C (95 aa).

The protein belongs to the GatC family. In terms of assembly, heterotrimer of A, B and C subunits.

The enzyme catalyses L-glutamyl-tRNA(Gln) + L-glutamine + ATP + H2O = L-glutaminyl-tRNA(Gln) + L-glutamate + ADP + phosphate + H(+). The catalysed reaction is L-aspartyl-tRNA(Asn) + L-glutamine + ATP + H2O = L-asparaginyl-tRNA(Asn) + L-glutamate + ADP + phosphate + 2 H(+). Its function is as follows. Allows the formation of correctly charged Asn-tRNA(Asn) or Gln-tRNA(Gln) through the transamidation of misacylated Asp-tRNA(Asn) or Glu-tRNA(Gln) in organisms which lack either or both of asparaginyl-tRNA or glutaminyl-tRNA synthetases. The reaction takes place in the presence of glutamine and ATP through an activated phospho-Asp-tRNA(Asn) or phospho-Glu-tRNA(Gln). This is Aspartyl/glutamyl-tRNA(Asn/Gln) amidotransferase subunit C from Marinobacter nauticus (strain ATCC 700491 / DSM 11845 / VT8) (Marinobacter aquaeolei).